Reading from the N-terminus, the 317-residue chain is Probable F-box protein At2g36090 (317 aa).

The 50-residue stretch at 25-74 (IESHILTRLDGATLASVSCASSHLHHLASNEILWSKICRSTWPSCSGGSR) folds into the F-box domain.

The sequence is that of Probable F-box protein At2g36090 from Arabidopsis thaliana (Mouse-ear cress).